The chain runs to 164 residues: Cell cycle link protein (164 aa).

The binding to host SKP1 protein stretch occupies residues 9–22; that stretch reads LPEELKEKIMNEHL. The short motif at 111-115 is the LXCXE motif, interaction with host RBR element; that stretch reads LYCSE.

This sequence belongs to the nanovirus Clink protein family. In terms of assembly, interacts with host SKP1. Interacts (via LXCXE domain) with host retinoblastoma-related protein 1 (RBR1). Interacts (via LXCXE domain) with retinoblastoma-related proteins (RBR).

In terms of biological role, interacts with and disrupts the function of host retinoblastoma-related proteins RBR, which are key regulators of the cell cycle. Induces transcriptional activation of E2F-regulated S-phase and G2/M-phase-specific genes. Inactivation of the ability of RBR to arrest the cell cycle leads to the stimulation of viral DNA replication. This chain is Cell cycle link protein (DNA-C), found in Trifolium subterraneum (Subterranean clover).